The sequence spans 328 residues: Methionyl-tRNA formyltransferase (328 aa).

Ser-110–Pro-113 provides a ligand contact to (6S)-5,6,7,8-tetrahydrofolate.

This sequence belongs to the Fmt family.

The enzyme catalyses L-methionyl-tRNA(fMet) + (6R)-10-formyltetrahydrofolate = N-formyl-L-methionyl-tRNA(fMet) + (6S)-5,6,7,8-tetrahydrofolate + H(+). Attaches a formyl group to the free amino group of methionyl-tRNA(fMet). The formyl group appears to play a dual role in the initiator identity of N-formylmethionyl-tRNA by promoting its recognition by IF2 and preventing the misappropriation of this tRNA by the elongation apparatus. This Bifidobacterium longum (strain DJO10A) protein is Methionyl-tRNA formyltransferase.